Here is a 296-residue protein sequence, read N- to C-terminus: Myeloid differentiation primary response protein MyD88 (296 aa).

In terms of domain architecture, Death spans 54–109 (MGFEYLEIRELETRPDPTRSLLDAWQGRSGASVGRLLELLALLDREDILKELKSRI). The interval 110–155 (EEDCQKYLGKQQNQESEKPLQVARVESSVPQTKELGGITTLDDPLG) is intermediate domain. Residues 159–293 (ELFDAFICYC…WFWTRLAKAL (135 aa)) form the TIR domain. Residue Ser244 is modified to Phosphoserine.

Homodimer. Also forms heterodimers with TIRAP. Binds to TLR2, TLR4, IRAK1, IRAK2 and IRAK4 via their respective TIR domains. Interacts with IL18R1. Interacts with BMX, IL1RL1, IKBKE and IRF7. Interacts with LRRFIP1 and LRRFIP2; this interaction positively regulates Toll-like receptor (TLR) signaling in response to agonist. Interacts with FLII. LRRFIP1 and LRRFIP2 compete with FLII for MYD88-binding. Interacts with IRF1. Upon IL1B treatment, forms a complex with PELI1, IRAK1, IRAK4 and TRAF6; this complex recruits MAP3K7/TAK1, TAB1 and TAB2 to mediate NF-kappa-B activation. Direct binding of SMAD6 to PELI1 prevents the complex formation and hence negatively regulates IL1R-TLR signaling and eventually NF-kappa-B-mediated gene expression. May interact with PIK3AP1. Interacts (via TIR domain) with DHX9 (via H2A and OB-fold regions); this interaction is direct. Interacts with OTUD4 deubiquitinase; the interaction is direct. Post-translationally, ubiquitinated; undergoes 'Lys-63'-linked polyubiquitination. OTUD4 specifically hydrolyzes 'Lys-63'-linked polyubiquitinated MYD88. Deubiquitinated by USP3 that cleaves 'Lys-63'-linked ubiquitin chains leading to inhibition of MYD88-induced NF-kappa-B signaling. Detected in bone marrow. Isoform 1 is expressed in testis, kidney, lung, ovary, adrenal gland, provstate, thymus and heart, and weakly in skeletal muscle, liver, spleen and brain. Isoform 2 is mainly expressed in the spleen and weakly in brain.

The protein resides in the cytoplasm. It localises to the nucleus. Adapter protein involved in the Toll-like receptor and IL-1 receptor signaling pathway in the innate immune response. Acts via IRAK1, IRAK2, IRF7 and TRAF6, leading to NF-kappa-B activation, cytokine secretion and the inflammatory response. Increases IL-8 transcription. Involved in IL-18-mediated signaling pathway. Activates IRF1 resulting in its rapid migration into the nucleus to mediate an efficient induction of IFN-beta, NOS2/INOS, and IL12A genes. Upon TLR8 activation by GU-rich single-stranded RNA (GU-rich RNA) derived from viruses, induces IL1B release through NLRP3 inflammasome activation. MyD88-mediated signaling in intestinal epithelial cells is crucial for maintenance of gut homeostasis and controls the expression of the antimicrobial lectin REG3G in the small intestine. Mediates leukocyte recruitment at the inflammatory site. Its function is as follows. Defective in its ability to induce IRAK phosphorylation and NF-kappa-B activation and can function as a negative regulator of activation by IL-1 or lipopolysaccharide (LPS). This Mus musculus (Mouse) protein is Myeloid differentiation primary response protein MyD88.